A 357-amino-acid polypeptide reads, in one-letter code: UDP-N-acetylglucosamine--N-acetylmuramyl-(pentapeptide) pyrophosphoryl-undecaprenol N-acetylglucosamine transferase (357 aa).

UDP-N-acetyl-alpha-D-glucosamine-binding positions include 7-9, Asn119, Arg159, Ser187, Ile241, and Gln286; that span reads TGG.

Belongs to the glycosyltransferase 28 family. MurG subfamily.

The protein resides in the cell inner membrane. It carries out the reaction di-trans,octa-cis-undecaprenyl diphospho-N-acetyl-alpha-D-muramoyl-L-alanyl-D-glutamyl-meso-2,6-diaminopimeloyl-D-alanyl-D-alanine + UDP-N-acetyl-alpha-D-glucosamine = di-trans,octa-cis-undecaprenyl diphospho-[N-acetyl-alpha-D-glucosaminyl-(1-&gt;4)]-N-acetyl-alpha-D-muramoyl-L-alanyl-D-glutamyl-meso-2,6-diaminopimeloyl-D-alanyl-D-alanine + UDP + H(+). It functions in the pathway cell wall biogenesis; peptidoglycan biosynthesis. Its function is as follows. Cell wall formation. Catalyzes the transfer of a GlcNAc subunit on undecaprenyl-pyrophosphoryl-MurNAc-pentapeptide (lipid intermediate I) to form undecaprenyl-pyrophosphoryl-MurNAc-(pentapeptide)GlcNAc (lipid intermediate II). This is UDP-N-acetylglucosamine--N-acetylmuramyl-(pentapeptide) pyrophosphoryl-undecaprenol N-acetylglucosamine transferase from Nitrosomonas europaea (strain ATCC 19718 / CIP 103999 / KCTC 2705 / NBRC 14298).